Reading from the N-terminus, the 260-residue chain is UPF0294 protein plu0699 (260 aa).

This sequence belongs to the UPF0294 family.

Its subcellular location is the cytoplasm. In Photorhabdus laumondii subsp. laumondii (strain DSM 15139 / CIP 105565 / TT01) (Photorhabdus luminescens subsp. laumondii), this protein is UPF0294 protein plu0699.